The following is a 468-amino-acid chain: FAD-linked oxidoreductase azaG (468 aa).

An N-terminal signal peptide occupies residues 1–16 (MQLSGILSWLLSWLWA). Asparagine 44 carries an N-linked (GlcNAc...) asparagine glycan. Positions 54–228 (TVHGAPHYLG…TSATYRTHQA (175 aa)) constitute an FAD-binding PCMH-type domain. N-linked (GlcNAc...) asparagine glycans are attached at residues asparagine 272, asparagine 348, and asparagine 464.

This sequence belongs to the oxygen-dependent FAD-linked oxidoreductase family. The cofactor is FAD.

It functions in the pathway secondary metabolite biosynthesis. In terms of biological role, FAD-linked oxidoreductase; part of the gene cluster that mediates the biosynthesis of azaphilones, a class of fungal metabolites characterized by a highly oxygenated pyrano-quinone bicyclic core and exhibiting a broad range of bioactivities. In the first step, the non-reducing polyketide synthase azaA forms the hexaketide precursor from successive condensations of five malonyl-CoA units, presumably with a simple acetyl-CoA starter unit. The reactive polyketide chain then undergoes a PT-mediated C2-C7 cyclization to afford the aromatic ring and is eventually released as an aldehyde through the R-domain. The putative ketoreductase azaE is proposed to catalyze the reduction of the terminal ketone resulting in the early culture product FK17-P2a. The monooxygenase azaH was demonstrated to be the only enzyme required to convert FK17-P2a to azanigerone E. AzaH first hydroxylates the benzaldehyde intermediate FK17-P2a at C4, which triggers the formation of the pyran-ring to afford azanigerone E. In parallel, the 2,4-dimethylhexanoyl chain is synthesized by the HR-PKS azaB and is proposed to be transferred to the C4-hydroxyl of azanigerone E by the acyltransferase azaD directly from the ACP domain of azaB. Alternatively, the 2,4-dimethyl-hexanoyl chain may be offloaded from the HR-PKS as a carboxylic acid and converted to an acyl-CoA by azaF. The resulting acyl-CoA molecule could then be taken up as a substrate by AzaD to form azanigerone B. To yield the carboxylic acid substituent in azanigerone A, the hydroxypropyl side chain of azanigerone B would need to undergo a C-C oxidative cleavage catalyzed by cytochrome P450 AzaI. AzaI is proposed to act on a vicinal diol that leads to a C-C bond scission either through an alkoxyradical intermediate or a peroxy complex. In the biosynthesis of azanigerone A, azanigerone B first undergoes hydroxylation at C10, possibly catalyzed by one of the two FAD-dependent monooxygenases encoded in the cluster, azaG or azaL, resulting in the vicinal diol azanigerone C. Oxidative cleavage of azanigerone C by azaI would yield the corresponding aldehyde derivative of azanigerone A. Finally, the dehydrogenase azaJ is proposed to convert the aldehyde functional group into the carboxylic acid, completing the conversion from azanigerone B to azanigerone A. Alternatively, the oxidation of aldehyde to carboxylic acid may be catalyzed by the same P450 enzyme azaI via consecutive oxidation or by endogenous alcohol dehydrogenase. This chain is FAD-linked oxidoreductase azaG, found in Aspergillus niger (strain ATCC 1015 / CBS 113.46 / FGSC A1144 / LSHB Ac4 / NCTC 3858a / NRRL 328 / USDA 3528.7).